The following is a 78-amino-acid chain: Small ribosomal subunit protein bS18 (78 aa).

This sequence belongs to the bacterial ribosomal protein bS18 family. Part of the 30S ribosomal subunit. Forms a tight heterodimer with protein bS6.

Binds as a heterodimer with protein bS6 to the central domain of the 16S rRNA, where it helps stabilize the platform of the 30S subunit. The protein is Small ribosomal subunit protein bS18 of Pseudothermotoga lettingae (strain ATCC BAA-301 / DSM 14385 / NBRC 107922 / TMO) (Thermotoga lettingae).